The sequence spans 186 residues: MAAEDTSVSGVSGRYATALFELARDQKAVDEVKADLDRFEALLGESADLKRLVRSPVFAADAQSRALTAVLDKVGIAGISANFLKVLTANRRLFVVADVIRAYRALVAKFKGEATADVTVAEALSDKNLDALKVALKSVTGKDVALNVKVDPSIIGGLVVKLGSRMVDGSLRTKLNSIKHAMKEAG.

This sequence belongs to the ATPase delta chain family. As to quaternary structure, F-type ATPases have 2 components, F(1) - the catalytic core - and F(0) - the membrane proton channel. F(1) has five subunits: alpha(3), beta(3), gamma(1), delta(1), epsilon(1). F(0) has three main subunits: a(1), b(2) and c(10-14). The alpha and beta chains form an alternating ring which encloses part of the gamma chain. F(1) is attached to F(0) by a central stalk formed by the gamma and epsilon chains, while a peripheral stalk is formed by the delta and b chains.

It is found in the cell inner membrane. Functionally, f(1)F(0) ATP synthase produces ATP from ADP in the presence of a proton or sodium gradient. F-type ATPases consist of two structural domains, F(1) containing the extramembraneous catalytic core and F(0) containing the membrane proton channel, linked together by a central stalk and a peripheral stalk. During catalysis, ATP synthesis in the catalytic domain of F(1) is coupled via a rotary mechanism of the central stalk subunits to proton translocation. In terms of biological role, this protein is part of the stalk that links CF(0) to CF(1). It either transmits conformational changes from CF(0) to CF(1) or is implicated in proton conduction. This chain is ATP synthase subunit delta, found in Bradyrhizobium diazoefficiens (strain JCM 10833 / BCRC 13528 / IAM 13628 / NBRC 14792 / USDA 110).